The primary structure comprises 209 residues: Large ribosomal subunit protein uL3 (209 aa).

The interval 133–152 (THGNSLSHRVPGSIGQNQTP) is disordered. Residue glutamine 150 is modified to N5-methylglutamine.

The protein belongs to the universal ribosomal protein uL3 family. In terms of assembly, part of the 50S ribosomal subunit. Forms a cluster with proteins L14 and L19. In terms of processing, methylated by PrmB.

Functionally, one of the primary rRNA binding proteins, it binds directly near the 3'-end of the 23S rRNA, where it nucleates assembly of the 50S subunit. This is Large ribosomal subunit protein uL3 from Yersinia pseudotuberculosis serotype O:1b (strain IP 31758).